The chain runs to 473 residues: G2/mitotic-specific cyclin-1 (473 aa).

Residues 1–12 are compositionally biased toward polar residues; the sequence is MGSRNIVQQQNR. 2 disordered regions span residues 1–23 and 134–155; these read MGSR…AMKQ and KEKP…APTL. A compositionally biased stretch (basic and acidic residues) spans 134–147; sequence KEKPIEKEKAAEKS.

It belongs to the cyclin family. Cyclin AB subfamily. Interacts with the CDC2 and CDK2 protein kinases to form a serine/threonine kinase holoenzyme complex. The cyclin subunit imparts substrate specificity to the complex.

Functionally, essential for the control of the cell cycle at the G2/M (mitosis) transition. G2/M cyclins accumulate steadily during G2 and are abruptly destroyed at mitosis. In Antirrhinum majus (Garden snapdragon), this protein is G2/mitotic-specific cyclin-1.